The chain runs to 109 residues: Cell division protein ZapA (109 aa).

Residues 22-99 (EQQDALNLAA…IEQALLEQGR (78 aa)) adopt a coiled-coil conformation.

The protein belongs to the ZapA family. Type 1 subfamily. Homodimer. Interacts with FtsZ.

It localises to the cytoplasm. Functionally, activator of cell division through the inhibition of FtsZ GTPase activity, therefore promoting FtsZ assembly into bundles of protofilaments necessary for the formation of the division Z ring. It is recruited early at mid-cell but it is not essential for cell division. This chain is Cell division protein ZapA, found in Erwinia tasmaniensis (strain DSM 17950 / CFBP 7177 / CIP 109463 / NCPPB 4357 / Et1/99).